The sequence spans 321 residues: MNRPERLQPGVKLRDAEKVSRIPVKVVPSERETMLRKPDWLRVKLPASNQRITDIKQALRKNGLHSVCEEASCPNLSECFNHGTATFMILGAICTRRCPFCDVAHGRPLKPDAEEPKKLAQTIKDMKLKYVVITSVDRDDLRDGGAQHFADCIREIRLLNPEIKIETLVPDFRGRIDAALDILATEPPDVFNHNLETAPMHYRKARPGANYQWSLDLLKKFKERHPDIPTKSGLMMGLGESNEEIAQVLYDLRAHNVEMLTLGQYLQPSKFHLAVERYVSPAEFDELKELAESIGFTHAACGPLVRSSYHADLQAQGKEVR.

[4Fe-4S] cluster contacts are provided by C68, C73, C79, C94, C98, C101, and S308. Residues 80-297 (FNHGTATFMI…KELAESIGFT (218 aa)) enclose the Radical SAM core domain.

This sequence belongs to the radical SAM superfamily. Lipoyl synthase family. [4Fe-4S] cluster serves as cofactor.

The protein resides in the cytoplasm. It catalyses the reaction [[Fe-S] cluster scaffold protein carrying a second [4Fe-4S](2+) cluster] + N(6)-octanoyl-L-lysyl-[protein] + 2 oxidized [2Fe-2S]-[ferredoxin] + 2 S-adenosyl-L-methionine + 4 H(+) = [[Fe-S] cluster scaffold protein] + N(6)-[(R)-dihydrolipoyl]-L-lysyl-[protein] + 4 Fe(3+) + 2 hydrogen sulfide + 2 5'-deoxyadenosine + 2 L-methionine + 2 reduced [2Fe-2S]-[ferredoxin]. It functions in the pathway protein modification; protein lipoylation via endogenous pathway; protein N(6)-(lipoyl)lysine from octanoyl-[acyl-carrier-protein]: step 2/2. Catalyzes the radical-mediated insertion of two sulfur atoms into the C-6 and C-8 positions of the octanoyl moiety bound to the lipoyl domains of lipoate-dependent enzymes, thereby converting the octanoylated domains into lipoylated derivatives. This Shewanella halifaxensis (strain HAW-EB4) protein is Lipoyl synthase.